Consider the following 137-residue polypeptide: Small ribosomal subunit protein bS16 (137 aa).

Positions 104–118 (ADEKKKPVLKPKTEK) are enriched in basic and acidic residues. The tract at residues 104-137 (ADEKKKPVLKPKTEKAAPAPEAAAPEAESTEEQA) is disordered. Over residues 119–130 (AAPAPEAAAPEA) the composition is skewed to low complexity.

It belongs to the bacterial ribosomal protein bS16 family.

This chain is Small ribosomal subunit protein bS16, found in Clavibacter michiganensis subsp. michiganensis (strain NCPPB 382).